The sequence spans 211 residues: Protein-methionine-sulfoxide reductase heme-binding subunit MsrQ (211 aa).

The next 5 membrane-spanning stretches (helical) occupy residues 8-28, 54-74, 82-102, 116-136, and 153-173; these read VIWL…WLVW, FLLA…PLLI, LWCF…ELGV, PYLT…FTST, and FVYL…KIIS.

It belongs to the MsrQ family. In terms of assembly, heterodimer of a catalytic subunit (MsrP) and a heme-binding subunit (MsrQ). FMN serves as cofactor. Heme b is required as a cofactor.

Its subcellular location is the cell inner membrane. Functionally, part of the MsrPQ system that repairs oxidized periplasmic proteins containing methionine sulfoxide residues (Met-O), using respiratory chain electrons. Thus protects these proteins from oxidative-stress damage caused by reactive species of oxygen and chlorine generated by the host defense mechanisms. MsrPQ is essential for the maintenance of envelope integrity under bleach stress, rescuing a wide series of structurally unrelated periplasmic proteins from methionine oxidation, including the primary periplasmic chaperone SurA and the lipoprotein Pal. MsrQ provides electrons for reduction to the reductase catalytic subunit MsrP, using the quinone pool of the respiratory chain. This is Protein-methionine-sulfoxide reductase heme-binding subunit MsrQ from Escherichia coli O6:K15:H31 (strain 536 / UPEC).